A 541-amino-acid chain; its full sequence is Berberine bridge enzyme-like 1 (541 aa).

Residues 1-20 (MKLSCLVFLIVSSLVSSSLA) form the signal peptide. N-linked (GlcNAc...) asparagine glycosylation is found at Asn25, Asn38, Asn73, Asn136, Asn302, Asn339, and Asn357. Cysteines 35 and 98 form a disulfide. The FAD-binding PCMH-type domain occupies 76-255 (TSPKPLLVIA…LSFKIKLVPV (180 aa)). Residues 113 to 180 (HDYDGVSYIS…GTHGFPAGVC (68 aa)) constitute a cross-link (6-(S-cysteinyl)-8alpha-(pros-histidyl)-FAD (His-Cys)).

This sequence belongs to the oxygen-dependent FAD-linked oxidoreductase family. It depends on FAD as a cofactor. The FAD cofactor is bound via a bicovalent 6-S-cysteinyl, 8alpha-N1-histidyl FAD linkage. As to expression, accumulates in cell walls of etiolated hypocotyls.

The protein resides in the secreted. Its subcellular location is the cell wall. In Arabidopsis thaliana (Mouse-ear cress), this protein is Berberine bridge enzyme-like 1.